The sequence spans 159 residues: NADH-quinone oxidoreductase subunit I (159 aa).

4Fe-4S ferredoxin-type domains follow at residues 51 to 80 (RRYENGEERCIACKLCEAICPAQAIVIEAD) and 90 to 119 (TRYDIDMTKCIYCGLCQEACPVDAIVEGPN). [4Fe-4S] cluster is bound by residues C60, C63, C66, C70, C99, C102, C105, and C109.

It belongs to the complex I 23 kDa subunit family. As to quaternary structure, NDH-1 is composed of 14 different subunits. Subunits NuoA, H, J, K, L, M, N constitute the membrane sector of the complex. The cofactor is [4Fe-4S] cluster.

It localises to the cell inner membrane. The enzyme catalyses a quinone + NADH + 5 H(+)(in) = a quinol + NAD(+) + 4 H(+)(out). Its function is as follows. NDH-1 shuttles electrons from NADH, via FMN and iron-sulfur (Fe-S) centers, to quinones in the respiratory chain. The immediate electron acceptor for the enzyme in this species is believed to be ubiquinone. Couples the redox reaction to proton translocation (for every two electrons transferred, four hydrogen ions are translocated across the cytoplasmic membrane), and thus conserves the redox energy in a proton gradient. This is NADH-quinone oxidoreductase subunit I from Rickettsia conorii (strain ATCC VR-613 / Malish 7).